We begin with the raw amino-acid sequence, 140 residues long: Small ribosomal subunit protein uS19 (140 aa).

The protein belongs to the universal ribosomal protein uS19 family.

Protein S19 forms a complex with S13 that binds strongly to the 16S ribosomal RNA. The polypeptide is Small ribosomal subunit protein uS19 (Methanocella arvoryzae (strain DSM 22066 / NBRC 105507 / MRE50)).